We begin with the raw amino-acid sequence, 278 residues long: HTH-type transcriptional activator RhaS (278 aa).

An HTH araC/xylS-type domain is found at 174-272 (NLLLAWLEDH…NWSPRDIRQG (99 aa)). DNA-binding regions (H-T-H motif) lie at residues 191 to 212 (DAVA…KQQT) and 239 to 262 (VTDI…RREF).

Binds DNA as a dimer.

The protein localises to the cytoplasm. Activates expression of the rhaBAD and rhaT operons. The polypeptide is HTH-type transcriptional activator RhaS (Escherichia coli (strain SMS-3-5 / SECEC)).